Here is a 527-residue protein sequence, read N- to C-terminus: MQIKDISHLYNIIKTFLLYGIDEALPQHRYTRAIRCWRKTLFWLRNQHKDKTFGLRLRLALQELGPVWIKLGQMLSTRRDLFPPDIADELALLQDQVDPFDGKIARAQIEKALGAPLETWFDEFNETALASASIAQVHTAKFKQNAPHLENRLAGKEVVLKVLRPNIQQMINADLSLMYKVASWIPRIKAEGRRLRPVEVVREYEKNLRDELDLRREMANAIQLRANFENSPMLYIPEMYKQFCHQTVIVMERIYGIPVSNIEELHANGTNMKLLAERGVQVFFTQVFRDSFFHADMHPGNIFVNRAHPDDPQYIGIDCGIVGRLNDHDKRYLAESFVAFFNRDYRRVAEMHVASGWTPKDTNIDDFEQAFREVCEPIFAKPLSEISFGHVLLNLFNVAREYNMEVQPQLVLLQKTLLYIEGLGRQLYPQLDLWDTAKPFLQKWLDEQMGIKAFTKSVKQKLPYWREHLVDLPENVMDALAQQKIIADELIHLNRTLAKKRNIPHFTSFILGLCTGLAIWLLIYLLS.

In terms of domain architecture, Protein kinase spans 123-527 (EFNETALASA…AIWLLIYLLS (405 aa)). ATP contacts are provided by residues 129–137 (LASASIAQV) and lysine 161. Aspartate 296 functions as the Proton acceptor in the catalytic mechanism. A helical transmembrane segment spans residues 506-526 (FTSFILGLCTGLAIWLLIYLL).

This sequence belongs to the ABC1 family. UbiB subfamily.

Its subcellular location is the cell inner membrane. Its pathway is cofactor biosynthesis; ubiquinone biosynthesis [regulation]. Its function is as follows. Is probably a protein kinase regulator of UbiI activity which is involved in aerobic coenzyme Q (ubiquinone) biosynthesis. The polypeptide is Probable protein kinase UbiB (Pasteurella multocida (strain Pm70)).